The chain runs to 251 residues: Triosephosphate isomerase (251 aa).

Residue 9–11 participates in substrate binding; it reads NWK. Residue histidine 95 is the Electrophile of the active site. Glutamate 167 serves as the catalytic Proton acceptor. Substrate is bound by residues glycine 173, serine 213, and 234–235; that span reads GG.

It belongs to the triosephosphate isomerase family. As to quaternary structure, homodimer.

It is found in the cytoplasm. The enzyme catalyses D-glyceraldehyde 3-phosphate = dihydroxyacetone phosphate. It functions in the pathway carbohydrate biosynthesis; gluconeogenesis. The protein operates within carbohydrate degradation; glycolysis; D-glyceraldehyde 3-phosphate from glycerone phosphate: step 1/1. Its function is as follows. Involved in the gluconeogenesis. Catalyzes stereospecifically the conversion of dihydroxyacetone phosphate (DHAP) to D-glyceraldehyde-3-phosphate (G3P). In Pediococcus pentosaceus (strain ATCC 25745 / CCUG 21536 / LMG 10740 / 183-1w), this protein is Triosephosphate isomerase.